Here is a 278-residue protein sequence, read N- to C-terminus: Large ribosomal subunit protein uL2 (278 aa).

The interval 218 to 278 is disordered; sequence RPHNRGVVMN…IMRSRHQRKK (61 aa).

Belongs to the universal ribosomal protein uL2 family. As to quaternary structure, part of the 50S ribosomal subunit. Forms a bridge to the 30S subunit in the 70S ribosome.

Its function is as follows. One of the primary rRNA binding proteins. Required for association of the 30S and 50S subunits to form the 70S ribosome, for tRNA binding and peptide bond formation. It has been suggested to have peptidyltransferase activity; this is somewhat controversial. Makes several contacts with the 16S rRNA in the 70S ribosome. The polypeptide is Large ribosomal subunit protein uL2 (Rhizobium etli (strain CIAT 652)).